Consider the following 84-residue polypeptide: Small ribosomal subunit protein bS20 (84 aa).

It belongs to the bacterial ribosomal protein bS20 family.

Binds directly to 16S ribosomal RNA. This Bacteroides fragilis (strain ATCC 25285 / DSM 2151 / CCUG 4856 / JCM 11019 / LMG 10263 / NCTC 9343 / Onslow / VPI 2553 / EN-2) protein is Small ribosomal subunit protein bS20.